Consider the following 145-residue polypeptide: Basic phospholipase A2 cL038 (145 aa).

Positions 1–21 (MYPAHLLVLLAVCVSLLGASA) are cleaved as a signal peptide. A propeptide spanning residues 22–27 (IPPLPL) is cleaved from the precursor. 7 cysteine pairs are disulfide-bonded: Cys38–Cys98, Cys54–Cys144, Cys56–Cys72, Cys71–Cys125, Cys78–Cys118, Cys87–Cys111, and Cys105–Cys116. Residues Tyr55, Gly57, and Gly59 each contribute to the Ca(2+) site. His75 is an active-site residue. Asp76 contributes to the Ca(2+) binding site. Residue Asp119 is part of the active site.

This sequence belongs to the phospholipase A2 family. Group I subfamily. D49 sub-subfamily. Ca(2+) serves as cofactor. Expressed by the venom gland.

It is found in the secreted. The catalysed reaction is a 1,2-diacyl-sn-glycero-3-phosphocholine + H2O = a 1-acyl-sn-glycero-3-phosphocholine + a fatty acid + H(+). PLA2 catalyzes the calcium-dependent hydrolysis of the 2-acyl groups in 3-sn-phosphoglycerides. This is Basic phospholipase A2 cL038 from Laticauda semifasciata (Black-banded sea krait).